A 252-amino-acid polypeptide reads, in one-letter code: MTSHAPDPVHQFEISRLINISVGNMDLSFTNVSFFIIATVVATSVFLFISSSSRGLVPTRMQSISEIAYEFVASTLRESCGVQGMQFFPLVFSLFTFILVANFIGLFPYFYTITSQIMITFSLAMLVILTVVGYGFRKHGIGFLKLFVPSGVPVVILPLVTMIEVISFFSRPISLSLRLFANMLAGHITLKVFSGFIVSMIELGIMGVGGSILPLIMTVAITALEFLVAFLQAYVFTVLTCMYLNDAVHPGH.

6 helical membrane-spanning segments follow: residues 29–49 (FTNV…FLFI), 87–107 (FFPL…IGLF), 116–136 (QIMI…GYGF), 146–166 (LFVP…IEVI), 183–205 (MLAG…ELGI), and 219–239 (VAIT…FTVL).

This sequence belongs to the ATPase A chain family. F-type ATPases have 2 components, CF(1) - the catalytic core - and CF(0) - the membrane proton channel. CF(1) has five subunits: alpha(3), beta(3), gamma(1), delta(1), epsilon(1). CF(0) has three main subunits: a(1), b(2) and c(9-12). The alpha and beta chains form an alternating ring which encloses part of the gamma chain. CF(1) is attached to CF(0) by a central stalk formed by the gamma and epsilon chains, while a peripheral stalk is formed by the delta and b chains.

Its subcellular location is the cell inner membrane. Functionally, key component of the proton channel; it plays a direct role in the translocation of protons across the membrane. This is ATP synthase subunit a from Bartonella quintana (strain Toulouse) (Rochalimaea quintana).